Here is a 276-residue protein sequence, read N- to C-terminus: Adenylate kinase (276 aa).

Residue 52-57 (GAGKGT) participates in ATP binding. The segment at 72–101 (ATGDMLRAQVAAKTPLGREAKKIMDAGGLV) is NMP. Residues Thr-73, Arg-78, 99 to 101 (GLV), 128 to 131 (GFPR), and Gln-135 each bind AMP. An LID region spans residues 169-206 (GRLVHPASGRSYHKIFNPPKAPMTDDVTGEPLIQRSDD). Residues Arg-170 and 179 to 180 (SY) contribute to the ATP site. Residues Arg-203 and Arg-214 each contribute to the AMP site. Gln-242 contacts ATP.

The protein belongs to the adenylate kinase family. AK2 subfamily. As to quaternary structure, monomer.

It is found in the cytoplasm. The protein localises to the cytosol. Its subcellular location is the mitochondrion intermembrane space. It carries out the reaction AMP + ATP = 2 ADP. Functionally, catalyzes the reversible transfer of the terminal phosphate group between ATP and AMP. Plays an important role in cellular energy homeostasis and in adenine nucleotide metabolism. Adenylate kinase activity is critical for regulation of the phosphate utilization and the AMP de novo biosynthesis pathways. This Pyrenophora tritici-repentis (strain Pt-1C-BFP) (Wheat tan spot fungus) protein is Adenylate kinase (adk1).